Consider the following 497-residue polypeptide: uncharacterized protein (497 aa).

The span at 1–16 (MSTTTETVTWSQYKPQ) shows a compositional bias: polar residues. A disordered region spans residues 1–29 (MSTTTETVTWSQYKPQETQRRLSRSSTIT). A Phosphoserine modification is found at Ser64. Transmembrane regions (helical) follow at residues 86-106 (IALV…ALPI), 120-140 (FSGL…YPML), 155-175 (FRPL…YSLA), 180-200 (WLYL…MFLY), 222-242 (LNIL…GILA), and 258-278 (AGSW…SIFF). Position 295 is a phosphoserine (Ser295). Helical transmembrane passes span 309 to 329 (FMLC…AGYQ), 348 to 368 (GNFL…STFL), 377 to 397 (IMLY…VLDA), 407 to 427 (FVLY…LVSL), 443 to 463 (VVQV…GAIF), and 468 to 488 (VGFI…LLYL).

The protein resides in the membrane. This is an uncharacterized protein from Schizosaccharomyces pombe (strain 972 / ATCC 24843) (Fission yeast).